We begin with the raw amino-acid sequence, 930 residues long: Isoleucine--tRNA ligase (930 aa).

Residues 57-67 (PYANGNIHVGH) carry the 'HIGH' region motif. Glu554 is an L-isoleucyl-5'-AMP binding site. The 'KMSKS' region motif lies at 595 to 599 (KMSKS). Lys598 is an ATP binding site. Cys888, Cys891, Cys908, and Cys911 together coordinate Zn(2+).

This sequence belongs to the class-I aminoacyl-tRNA synthetase family. IleS type 1 subfamily. Monomer. Zn(2+) is required as a cofactor.

The protein resides in the cytoplasm. The catalysed reaction is tRNA(Ile) + L-isoleucine + ATP = L-isoleucyl-tRNA(Ile) + AMP + diphosphate. Functionally, catalyzes the attachment of isoleucine to tRNA(Ile). As IleRS can inadvertently accommodate and process structurally similar amino acids such as valine, to avoid such errors it has two additional distinct tRNA(Ile)-dependent editing activities. One activity is designated as 'pretransfer' editing and involves the hydrolysis of activated Val-AMP. The other activity is designated 'posttransfer' editing and involves deacylation of mischarged Val-tRNA(Ile). This chain is Isoleucine--tRNA ligase, found in Streptococcus pneumoniae (strain Taiwan19F-14).